Consider the following 396-residue polypeptide: MNLIKMSDIDLSGKRVLIREDLNVPIKDGMITSDQRLQAALPTIKSALDNGAAVIVLSHLGRPEEGKYEKKFSLEPVADYLRKNLEYPVRFVKDYLSGVDVKPGELVVCENVRFNPGEKANDEALAKKLANLCDVFVMDAFGTAHRAQASTYGVAQYAPVAVAGPLLIRELEALNQVLKAPKKPIVAIVGGAKVSSKLSLLKQLVGMVDVLIPGGGIANTFLKAQGFEIGISLYEPDLLDEARHILILAKEKGCQIPLPTDVVVGKTFSETCPAFNKSLSNVAEDDMILDIGPETIRDYVDLIHEANTIIWNGPVGVFEFPQFAYGTRAIAIAIAESDAFSIAGGGDTLAAVDLYDLNQQISYISTGGGAFLECLEGKTLPAVAILQERAKHVKTN.

Substrate is bound by residues 21-23 (DLN), Arg-36, 59-62 (HLGR), Arg-113, and Arg-146. ATP contacts are provided by residues Lys-197, Glu-319, and 345 to 348 (GGDT).

Belongs to the phosphoglycerate kinase family. In terms of assembly, monomer.

The protein resides in the cytoplasm. It carries out the reaction (2R)-3-phosphoglycerate + ATP = (2R)-3-phospho-glyceroyl phosphate + ADP. It participates in carbohydrate degradation; glycolysis; pyruvate from D-glyceraldehyde 3-phosphate: step 2/5. The polypeptide is Phosphoglycerate kinase (Legionella pneumophila (strain Paris)).